Reading from the N-terminus, the 387-residue chain is [LysW]-aminoadipate semialdehyde/glutamate semialdehyde transaminase (387 aa).

Pyridoxal 5'-phosphate contacts are provided by residues 96 to 97 (GT) and F123. R126 is a binding site for substrate. 207-210 (DEIQ) contributes to the pyridoxal 5'-phosphate binding site. Position 236 is an N6-(pyridoxal phosphate)lysine (K236). S264 is a binding site for substrate. Residue T265 participates in pyridoxal 5'-phosphate binding.

It belongs to the class-III pyridoxal-phosphate-dependent aminotransferase family. LysJ subfamily. As to quaternary structure, homodimer. Requires pyridoxal 5'-phosphate as cofactor.

It localises to the cytoplasm. It catalyses the reaction [amino-group carrier protein]-C-terminal-gamma-(L-lysyl)-L-glutamate + 2-oxoglutarate = [amino-group carrier protein]-C-terminal-N-(1-carboxy-5-oxopentan-1-yl)-L-glutamine + L-glutamate. The enzyme catalyses [amino-group carrier protein]-C-terminal-gamma-(L-ornithyl)-L-glutamate + 2-oxoglutarate = [amino-group carrier protein]-C-terminal-gamma-(L-glutamyl-5-semialdehyde)-L-glutamate + L-glutamate. It functions in the pathway amino-acid biosynthesis; L-lysine biosynthesis via AAA pathway; L-lysine from L-alpha-aminoadipate (Thermus route): step 4/5. It participates in amino-acid biosynthesis; L-arginine biosynthesis. Functionally, involved in both the arginine and lysine biosynthetic pathways. In Sulfolobus acidocaldarius (strain ATCC 33909 / DSM 639 / JCM 8929 / NBRC 15157 / NCIMB 11770), this protein is [LysW]-aminoadipate semialdehyde/glutamate semialdehyde transaminase.